The sequence spans 644 residues: Exoribonuclease 2 (644 aa).

The RNB domain maps to 189 to 516; that stretch reads RQDLTALNFV…NHRLLKAVIK (328 aa). The region spanning 561-643 is the S1 motif domain; it reads NTRFAAEIID…ETRSIIARPA (83 aa).

This sequence belongs to the RNR ribonuclease family. RNase II subfamily.

The protein resides in the cytoplasm. The enzyme catalyses Exonucleolytic cleavage in the 3'- to 5'-direction to yield nucleoside 5'-phosphates.. Functionally, involved in mRNA degradation. Hydrolyzes single-stranded polyribonucleotides processively in the 3' to 5' direction. The polypeptide is Exoribonuclease 2 (Salmonella newport (strain SL254)).